The primary structure comprises 274 residues: 4-diphosphocytidyl-2-C-methyl-D-erythritol kinase (274 aa).

Lys9 is an active-site residue. Residue 91–101 (PAGAGLGGGSS) participates in ATP binding. Residue Asp133 is part of the active site.

The protein belongs to the GHMP kinase family. IspE subfamily.

It carries out the reaction 4-CDP-2-C-methyl-D-erythritol + ATP = 4-CDP-2-C-methyl-D-erythritol 2-phosphate + ADP + H(+). It participates in isoprenoid biosynthesis; isopentenyl diphosphate biosynthesis via DXP pathway; isopentenyl diphosphate from 1-deoxy-D-xylulose 5-phosphate: step 3/6. Functionally, catalyzes the phosphorylation of the position 2 hydroxy group of 4-diphosphocytidyl-2C-methyl-D-erythritol. This is 4-diphosphocytidyl-2-C-methyl-D-erythritol kinase from Persephonella marina (strain DSM 14350 / EX-H1).